The following is a 265-amino-acid chain: Phosphate import ATP-binding protein PstB (265 aa).

Positions 18 to 260 constitute an ABC transporter domain; sequence IAAKGVNVYY…PEDPRTESYI (243 aa). 50–57 serves as a coordination point for ATP; that stretch reads GPSGCGKS.

It belongs to the ABC transporter superfamily. Phosphate importer (TC 3.A.1.7) family. As to quaternary structure, the complex is composed of two ATP-binding proteins (PstB), two transmembrane proteins (PstC and PstA) and a solute-binding protein (PstS).

Its subcellular location is the cell inner membrane. It carries out the reaction phosphate(out) + ATP + H2O = ADP + 2 phosphate(in) + H(+). Part of the ABC transporter complex PstSACB involved in phosphate import. Responsible for energy coupling to the transport system. This is Phosphate import ATP-binding protein PstB from Ruegeria sp. (strain TM1040) (Silicibacter sp.).